Reading from the N-terminus, the 87-residue chain is Homeotic protein ultrabithorax (87 aa).

An Antp-type hexapeptide motif is present at residues phenylalanine 22–alanine 27.

Belongs to the Antp homeobox family. In the embryo, expression is seen in the epidermis, somatic and visceral mesoderm, and the peripheral and central nervous system.

The protein resides in the nucleus. Functionally, sequence-specific transcription factor which is part of a developmental regulatory system that provides cells with specific positional identities on the anterior-posterior axis. Binds the consensus region 5'-TTAAT[GT][GA]-3'. This homeotic protein controls development of the cells in the posterior thoracic and first abdominal segments. It activates the synthesis of the decapentaplegic (DPP) growth factor. The protein is Homeotic protein ultrabithorax (Ubx) of Drosophila virilis (Fruit fly).